The primary structure comprises 376 residues: Phospho-N-acetylmuramoyl-pentapeptide-transferase (376 aa).

Transmembrane regions (helical) follow at residues 28–48 (RTIMATITAMVLTFVLAPWFI), 76–96 (TMGGALILLSLLLPTVLWADL), 100–120 (FVLATTAVTAGYGVIGYLDDF), 135–155 (YKLIGQVLIGGAAVAYTFLLA), 179–199 (YPIELPLYVYIPFAVFVVVAT), 211–231 (GLAIGPVIINAGTYLILAYIV), 252–272 (AGELSVYCGSVIGAGIGFLWY), 279–299 (VFMGDVGSLALGGGLGMLAVF), 307–327 (IILGGIFFIETVSVITQVLSF), and 353–373 (KIIVRFWIISILLALVSLASM).

The protein belongs to the glycosyltransferase 4 family. MraY subfamily. It depends on Mg(2+) as a cofactor.

It is found in the cell inner membrane. The enzyme catalyses UDP-N-acetyl-alpha-D-muramoyl-L-alanyl-gamma-D-glutamyl-meso-2,6-diaminopimeloyl-D-alanyl-D-alanine + di-trans,octa-cis-undecaprenyl phosphate = di-trans,octa-cis-undecaprenyl diphospho-N-acetyl-alpha-D-muramoyl-L-alanyl-D-glutamyl-meso-2,6-diaminopimeloyl-D-alanyl-D-alanine + UMP. Its pathway is cell wall biogenesis; peptidoglycan biosynthesis. In terms of biological role, catalyzes the initial step of the lipid cycle reactions in the biosynthesis of the cell wall peptidoglycan: transfers peptidoglycan precursor phospho-MurNAc-pentapeptide from UDP-MurNAc-pentapeptide onto the lipid carrier undecaprenyl phosphate, yielding undecaprenyl-pyrophosphoryl-MurNAc-pentapeptide, known as lipid I. The polypeptide is Phospho-N-acetylmuramoyl-pentapeptide-transferase (Sorangium cellulosum (strain So ce56) (Polyangium cellulosum (strain So ce56))).